Consider the following 2474-residue polypeptide: Highly reducing polyketide synthase 40 (2474 aa).

In terms of domain architecture, Ketosynthase family 3 (KS3) spans 1 to 294; it reads MFKETEIQQR…GSNAHIIIDD (294 aa). Active-site for beta-ketoacyl synthase activity residues include Cys-42, His-177, and His-217. One can recognise a Malonyl-CoA:ACP transacylase (MAT) domain in the interval 459-798; the sequence is FVFTGQGAQW…GYESVLRRGT (340 aa). The interval 864 to 998 is N-terminal hotdog fold; the sequence is HELLGAPVPD…GLVVTEYEQP (135 aa). Residues 864 to 1182 enclose the PKS/mFAS DH domain; it reads HELLGAPVPD…ITTVARSEGA (319 aa). Catalysis depends on His-896, which acts as the Proton acceptor; for dehydratase activity. The interval 1027-1182 is C-terminal hotdog fold; the sequence is KVETSFRQLY…ITTVARSEGA (156 aa). The Proton donor; for dehydratase activity role is filled by Asp-1093. Positions 1232–1535 are methyltransferase (CMet) domain; the sequence is VEMMCFLYIK…DLHIYDFPDH (304 aa). The Enoyl reductase (ER) domain occupies 1770 to 2063; that stretch reads GLLDSLQFQD…SGSHMGKLVL (294 aa). Residues 2087 to 2263 form the Ketoreductase (KR) domain; the sequence is ASYLLSGGLG…PGVAVDLGMI (177 aa). Residues 2385 to 2462 enclose the Carrier domain; sequence DAAKIVSAAI…ELAELAAKRS (78 aa). Ser-2422 carries the O-(pantetheine 4'-phosphoryl)serine modification.

Requires pantetheine 4'-phosphate as cofactor.

It functions in the pathway secondary metabolite biosynthesis. In terms of biological role, highly reducing polyketide synthase; part of the gene cluster that mediates the biosynthesis of the gamma-pyrones fusapyrone (FPY) and deoxyfusapyrone (dFPY). FPY is an undecaketide and thus likely synthesized by the polyketide synthase FPY1 from acetyl-CoA functioning as starter unit and the addition of 10 malonyl-CoA extender units by successive Claisen-condensations. Next to this, FPY shares some rare features: C-glycosylated 4-deoxyglucose at C-3, a gem-dimethyl group at C-13, and an alpha-beta to beta-gamma double bond shift at C-20. During FPY biosynthesis mono-C-methyl groups are transferred to the tetra-, penta-, hexa- and heptaketide, while two C-methyl groups are transferred to the nonaketide, suggesting that the CMet domain is programmed to selectively catalyze two successive C-alpha-methylation reactions of the nonaketide, while other alpha-carbons are non- or mono-methylated only. While the origin of the 4'-deoxyglucose moiety remains opaque, its transfer to C-3 is most likely mediated by the C-glycosyltransferase FPY2. Next to this, the hydroxyl group present at C-33 and discriminating between FPY and dFPY, is likely to be installed by the cytochrome P450 monooxygenase FPY7. No putative function can be predicted for the remaining genes FPY3-FPY6. The polypeptide is Highly reducing polyketide synthase 40 (Fusarium mangiferae (Mango malformation disease fungus)).